A 127-amino-acid polypeptide reads, in one-letter code: Large ribosomal subunit protein mL55 (127 aa).

A mitochondrion-targeting transit peptide spans Met-1–Ala-32. At Ser-84 the chain carries Phosphoserine.

This sequence belongs to the mitochondrion-specific ribosomal protein mL55 family. As to quaternary structure, component of the mitochondrial ribosome large subunit (39S) which comprises a 16S rRNA and about 50 distinct proteins.

It localises to the mitochondrion. This chain is Large ribosomal subunit protein mL55 (Mrpl55), found in Mus musculus (Mouse).